Consider the following 51-residue polypeptide: Large ribosomal subunit protein bL33 (51 aa).

The protein belongs to the bacterial ribosomal protein bL33 family.

This Nitrosococcus oceani (strain ATCC 19707 / BCRC 17464 / JCM 30415 / NCIMB 11848 / C-107) protein is Large ribosomal subunit protein bL33.